The primary structure comprises 560 residues: 2-succinyl-5-enolpyruvyl-6-hydroxy-3-cyclohexene-1-carboxylate synthase (560 aa).

Belongs to the TPP enzyme family. MenD subfamily. As to quaternary structure, homodimer. Mg(2+) serves as cofactor. The cofactor is Mn(2+). Requires thiamine diphosphate as cofactor.

The enzyme catalyses isochorismate + 2-oxoglutarate + H(+) = 5-enolpyruvoyl-6-hydroxy-2-succinyl-cyclohex-3-ene-1-carboxylate + CO2. It functions in the pathway quinol/quinone metabolism; 1,4-dihydroxy-2-naphthoate biosynthesis; 1,4-dihydroxy-2-naphthoate from chorismate: step 2/7. It participates in quinol/quinone metabolism; menaquinone biosynthesis. In terms of biological role, catalyzes the thiamine diphosphate-dependent decarboxylation of 2-oxoglutarate and the subsequent addition of the resulting succinic semialdehyde-thiamine pyrophosphate anion to isochorismate to yield 2-succinyl-5-enolpyruvyl-6-hydroxy-3-cyclohexene-1-carboxylate (SEPHCHC). The protein is 2-succinyl-5-enolpyruvyl-6-hydroxy-3-cyclohexene-1-carboxylate synthase of Pectobacterium carotovorum subsp. carotovorum (strain PC1).